Consider the following 779-residue polypeptide: MSTKPTINKDELVTLFSQIGLDSSKAKETTNNATLSSNLQEIIKEAGAESGCEKSVGLLLYTLATKYPANAMKHRATLVDYIANKKSVNSINLQACLDYLRRTANEELNVAEFEQSCGVGVVITREQVAQAVSDYINKNKSDLLEKRYQFNIGGILMEIKNSLKWANAKDIKEEVDAAILSLLGPKTDADKAPPAKPVKPTTPTAVATTTAATTTTGDLSPIIPAELKPAKEEIKFPDPSDNIQNTPKLLADHLKTTGGKIVTRFPPEPNGYLHIGHAKAMHLNFGYAKKNGGKCYLRFDDTNPEKENQEYIDSIIDSVKWLGHEPCEITYSSSQFDTLYEMANELIRRGYAYVCHQTASEISEGREKMTDSPYRNRTVEENLKLFEDMRLGKFEEGKAILRMKGDMKHPNPCMRDLIAYRIKYHHHPMSGDKWCIYPSYDYTHCLVDSIENITHSLCTLEFEIRRLTYNWLIDVLGLYRPVVWEYARLNLTHTVLSKRKIITLVQNKIVNGWDDPRLSTLNAFRRKGYTPEAINLLCDTIGVTRTNGTTISYELLELCCRQDLDGKATRAMAVFDPIKVVITNYPEDKSEEINAPNIPSKPEKGTHKIDFSRIVYIERSDFRMEDNKDFFGLAPGKEILLKYAYNIKCEKVIQDADGKVTELHVTYDKDNSSKKLKTIHWVSSVAGTEPMKAEVRLYEHLFKDSEIGDDWLNNINPNSLRIIPNAFIDKTVLASKEYDRYQFERVGYFVVDKDTTSDKMVFNRTVSLKENKEKSKSRN.

ATP contacts are provided by residues 268-270 and 274-280; these read EPN and HIGHAKA. L-glutamine is bound by residues Asp-300 and Tyr-440. ATP contacts are provided by residues Thr-459, 488 to 489, and 496 to 498; these read RL and LSK.

This sequence belongs to the class-I aminoacyl-tRNA synthetase family.

It catalyses the reaction tRNA(Gln) + L-glutamine + ATP = L-glutaminyl-tRNA(Gln) + AMP + diphosphate. The chain is Probable glutamine--tRNA ligase (glnS) from Dictyostelium discoideum (Social amoeba).